The chain runs to 579 residues: F-box protein At5g39450 (579 aa).

In terms of domain architecture, F-box spans 16-62 (TCLLLSLPEDVIAVIARFVSPRDICNLSLCCKSLCDVVDSERIWLVQ).

This chain is F-box protein At5g39450, found in Arabidopsis thaliana (Mouse-ear cress).